The primary structure comprises 254 residues: 7-cyano-7-deazaguanine synthase (254 aa).

Position 30–40 (30–40 (YSGGQDSATCL)) interacts with ATP. 4 residues coordinate Zn(2+): C218, C233, C236, and C239.

It belongs to the QueC family. The cofactor is Zn(2+).

It catalyses the reaction 7-carboxy-7-deazaguanine + NH4(+) + ATP = 7-cyano-7-deazaguanine + ADP + phosphate + H2O + H(+). Its pathway is purine metabolism; 7-cyano-7-deazaguanine biosynthesis. Its function is as follows. Catalyzes the ATP-dependent conversion of 7-carboxy-7-deazaguanine (CDG) to 7-cyano-7-deazaguanine (preQ(0)). This is 7-cyano-7-deazaguanine synthase from Zymomonas mobilis subsp. mobilis (strain ATCC 31821 / ZM4 / CP4).